Consider the following 165-residue polypeptide: UPF0669 protein v1g209471 (165 aa).

The N-terminal stretch at 1–23 (MQGRYSAPLFLLLWLFFLHGTLC) is a signal peptide. The N-linked (GlcNAc...) asparagine glycan is linked to Asn38.

This sequence belongs to the UPF0669 family.

It is found in the secreted. The chain is UPF0669 protein v1g209471 from Nematostella vectensis (Starlet sea anemone).